Here is a 327-residue protein sequence, read N- to C-terminus: Aldo-keto reductase family 1 member A1 (327 aa).

Residues 13–22 (GQKIPLIGLG), T23, W24, and D47 contribute to the NADP(+) site. Y52 serves as the catalytic Proton donor. NADP(+)-binding residues include S164, N165, S213, L215, S217, K265, S266, V267, T268, R271, Q274, and N275.

This sequence belongs to the aldo/keto reductase family.

Its subcellular location is the cytoplasm. The protein resides in the cytosol. It is found in the apical cell membrane. The enzyme catalyses a primary alcohol + NADP(+) = an aldehyde + NADPH + H(+). It carries out the reaction S-nitroso-CoA + NADPH + H(+) = sulfinamide-CoA + NADP(+). The catalysed reaction is S-nitrosoglutathione + NADPH + H(+) = S-(hydroxysulfenamide)glutathione + NADP(+). Its function is as follows. Catalyzes the NADPH-dependent reduction of a wide variety of carbonyl-containing compounds to their corresponding alcohols. Displays enzymatic activity towards endogenous metabolites such as aromatic and aliphatic aldehydes, ketones, monosaccharides and bile acids. Acts as an aldehyde-detoxification enzyme. Also acts as an inhibitor of protein S-nitrosylation by mediating degradation of S-nitroso-coenzyme A (S-nitroso-CoA), a cofactor required to S-nitrosylate proteins. Also acts as a S-nitroso-glutathione reductase by catalyzing the NADPH-dependent reduction of S-nitrosoglutathione. Displays no reductase activity towards retinoids. The protein is Aldo-keto reductase family 1 member A1 (AKR1A1) of Gallus gallus (Chicken).